We begin with the raw amino-acid sequence, 190 residues long: GTP cyclohydrolase 1 (190 aa).

Zn(2+)-binding residues include cysteine 80, histidine 83, and cysteine 151.

The protein belongs to the GTP cyclohydrolase I family. In terms of assembly, toroid-shaped homodecamer, composed of two pentamers of five dimers.

It catalyses the reaction GTP + H2O = 7,8-dihydroneopterin 3'-triphosphate + formate + H(+). Its pathway is cofactor biosynthesis; 7,8-dihydroneopterin triphosphate biosynthesis; 7,8-dihydroneopterin triphosphate from GTP: step 1/1. The sequence is that of GTP cyclohydrolase 1 from Rickettsia akari (strain Hartford).